The following is a 318-amino-acid chain: Aldehyde oxidoreductase FAD-binding subunit PaoB (318 aa).

Residues 1-223 form the FAD-binding PCMH-type domain; that stretch reads MKAFTYERVN…VAVTLPPPLG (223 aa). FAD-binding positions include 26–34 and Thr108; that span reads KFIAGGTNL. Residues Cys119, Cys129, Cys138, and Cys157 each coordinate [4Fe-4S] cluster. FAD contacts are provided by Asp164, Ile213, and Lys230.

In terms of assembly, heterotrimer composed of PaoA, PaoB and PaoC. Requires FAD as cofactor. It depends on [4Fe-4S] cluster as a cofactor.

It localises to the periplasm. It carries out the reaction an aldehyde + A + H2O = a carboxylate + AH2 + H(+). The complex requires PaoD for activity. Oxidizes aldehydes to the corresponding carboxylic acids with a preference for aromatic aldehydes. It might play a role in the detoxification of aldehydes to avoid cell damage. This chain is Aldehyde oxidoreductase FAD-binding subunit PaoB, found in Escherichia coli (strain K12).